The primary structure comprises 412 residues: Divalent metal cation transporter MntH (412 aa).

Over 1-19 (MTNYRVESSSGRAARKTRL) the chain is Cytoplasmic. A helical membrane pass occupies residues 20-39 (ALMGPAFIAAIGYIDPGNFA). The Periplasmic portion of the chain corresponds to 40 to 51 (TNIQAGASFGYQ). The chain crosses the membrane as a helical span at residues 52–71 (LLWVVVWANLMAMLIQILSA). Over 72–95 (KLGIATGKNLAEQIRDHYPRPVVW) the chain is Cytoplasmic. A helical transmembrane segment spans residues 96-118 (FYWVQAEIIAMATDLAEFIGAAI). Residues 119 to 125 (GFKLILG) are Periplasmic-facing. Residues 126–145 (VSLLQGAVLTGIATFLILML) traverse the membrane as a helical segment. Residues 146–155 (QRRGQKPLEK) lie on the Cytoplasmic side of the membrane. The chain crosses the membrane as a helical span at residues 156-175 (VIGGLLLFVAAAYIVELIFS). At 176 to 196 (QPNLAQLGKGMVIPSLPTSEA) the chain is on the periplasmic side. The chain crosses the membrane as a helical span at residues 197 to 220 (VFLAAGVLGATIMPHVIYLHSSLT). Residues 221–238 (QHLHGGSRQQRYSATKWD) lie on the Cytoplasmic side of the membrane. The chain crosses the membrane as a helical span at residues 239–258 (VAIAMTIAGFVNLAMMATAA). Over 259–276 (AAFHFSGHTGVADLDEAY) the chain is Periplasmic. The helical transmembrane segment at 277-297 (LTLQPLLSHAAATVFGLSLVA) threads the bilayer. The Cytoplasmic portion of the chain corresponds to 298 to 327 (AGLSSTVVGTLAGQVVMQGFIRFHIPLWVR). The helical transmembrane segment at 328 to 344 (RTVTMLPSFIVILMGLD) threads the bilayer. Residues 345–350 (PTRILV) are Periplasmic-facing. The chain crosses the membrane as a helical span at residues 351–370 (MSQVLLSFGIALALVPLLIF). At 371-387 (TSDSKLMGDLVNSKRVK) the chain is on the cytoplasmic side. The helical transmembrane segment at 388 to 406 (QTGWVIVVLVVALNIWLLV) threads the bilayer. At 407-412 (GTALGL) the chain is on the periplasmic side.

The protein belongs to the NRAMP family.

It localises to the cell inner membrane. H(+)-stimulated, divalent metal cation uptake system. The chain is Divalent metal cation transporter MntH from Escherichia coli O9:H4 (strain HS).